Here is a 248-residue protein sequence, read N- to C-terminus: 5'-nucleotidase SurE (248 aa).

A divalent metal cation is bound by residues D8, D9, S39, and N91.

It belongs to the SurE nucleotidase family. It depends on a divalent metal cation as a cofactor.

Its subcellular location is the cytoplasm. It catalyses the reaction a ribonucleoside 5'-phosphate + H2O = a ribonucleoside + phosphate. In terms of biological role, nucleotidase that shows phosphatase activity on nucleoside 5'-monophosphates. In Geotalea uraniireducens (strain Rf4) (Geobacter uraniireducens), this protein is 5'-nucleotidase SurE.